Reading from the N-terminus, the 567-residue chain is NADH-ubiquinone oxidoreductase chain 2 (567 aa).

14 consecutive transmembrane segments (helical) span residues 2–22 (LILS…IDTI), 43–63 (IGII…LSYI), 85–105 (NIFN…LLSI), 133–153 (LNIY…LLLT), 158–178 (ISIF…TGII), 189–209 (LFYY…ISLL), 236–256 (ILIG…AAPM), 274–294 (YISL…ILNL), 312–332 (LIYI…IGGL), 340–360 (ILAY…LSLI), 372–392 (IIYI…LIIA), 423–443 (LIFC…LFGF), 459–479 (LFLS…YLYF), and 530–550 (VGNY…FNFI).

This sequence belongs to the complex I subunit 2 family.

Its subcellular location is the mitochondrion inner membrane. It catalyses the reaction a ubiquinone + NADH + 5 H(+)(in) = a ubiquinol + NAD(+) + 4 H(+)(out). In terms of biological role, core subunit of the mitochondrial membrane respiratory chain NADH dehydrogenase (Complex I) that is believed to belong to the minimal assembly required for catalysis. Complex I functions in the transfer of electrons from NADH to the respiratory chain. The immediate electron acceptor for the enzyme is believed to be ubiquinone. This Wickerhamomyces canadensis (Yeast) protein is NADH-ubiquinone oxidoreductase chain 2 (ND2).